The following is a 127-amino-acid chain: Small ribosomal subunit protein uS12 (127 aa).

Position 89 is a 3-methylthioaspartic acid (aspartate 89).

The protein belongs to the universal ribosomal protein uS12 family. Part of the 30S ribosomal subunit. Contacts proteins S8 and S17. May interact with IF1 in the 30S initiation complex.

With S4 and S5 plays an important role in translational accuracy. In terms of biological role, interacts with and stabilizes bases of the 16S rRNA that are involved in tRNA selection in the A site and with the mRNA backbone. Located at the interface of the 30S and 50S subunits, it traverses the body of the 30S subunit contacting proteins on the other side and probably holding the rRNA structure together. The combined cluster of proteins S8, S12 and S17 appears to hold together the shoulder and platform of the 30S subunit. This is Small ribosomal subunit protein uS12 from Campylobacter lari (strain RM2100 / D67 / ATCC BAA-1060).